The sequence spans 54 residues: Large ribosomal subunit protein bL32c (54 aa).

The protein belongs to the bacterial ribosomal protein bL32 family.

The protein resides in the plastid. It localises to the chloroplast. This Gossypium barbadense (Sea Island cotton) protein is Large ribosomal subunit protein bL32c.